Consider the following 121-residue polypeptide: Large ribosomal subunit protein bL12 (121 aa).

Belongs to the bacterial ribosomal protein bL12 family. Homodimer. Part of the ribosomal stalk of the 50S ribosomal subunit. Forms a multimeric L10(L12)X complex, where L10 forms an elongated spine to which 2 to 4 L12 dimers bind in a sequential fashion. Binds GTP-bound translation factors.

Forms part of the ribosomal stalk which helps the ribosome interact with GTP-bound translation factors. Is thus essential for accurate translation. This is Large ribosomal subunit protein bL12 from Streptococcus agalactiae serotype V (strain ATCC BAA-611 / 2603 V/R).